Here is a 717-residue protein sequence, read N- to C-terminus: Pre-mRNA-splicing factor ATP-dependent RNA helicase DEAH10 (717 aa).

The segment at 1-29 (MPSMAQGELKSFVQNSRPNPKSPTVSPFS) is disordered. Residues 12-29 (FVQNSRPNPKSPTVSPFS) show a composition bias toward polar residues. Residues 51–256 (VEEVQKNDIL…FGGAKAVHVQ (206 aa)) enclose the Helicase ATP-binding domain. 64–71 (GETGSGKT) serves as a coordination point for ATP. The short motif at 162–165 (DEAH) is the DEAH box element. The 176-residue stretch at 278-453 (TLVTIFQIHF…NIILQLKALG (176 aa)) folds into the Helicase C-terminal domain.

This sequence belongs to the DEAD box helicase family. DEAH subfamily. PRP22 sub-subfamily. Widely expressed but spatially and temporally regulated during development.

It localises to the nucleus. The protein resides in the nucleolus. The catalysed reaction is ATP + H2O = ADP + phosphate + H(+). Functionally, involved in pre-mRNA splicing. Plays a role during development in processes such as meristem maintenance, leaf morphogenesis and root morphogenesis. The sequence is that of Pre-mRNA-splicing factor ATP-dependent RNA helicase DEAH10 from Arabidopsis thaliana (Mouse-ear cress).